The primary structure comprises 366 residues: Histidinol-phosphate aminotransferase (366 aa).

K228 bears the N6-(pyridoxal phosphate)lysine mark.

This sequence belongs to the class-II pyridoxal-phosphate-dependent aminotransferase family. Histidinol-phosphate aminotransferase subfamily. In terms of assembly, homodimer. It depends on pyridoxal 5'-phosphate as a cofactor.

It catalyses the reaction L-histidinol phosphate + 2-oxoglutarate = 3-(imidazol-4-yl)-2-oxopropyl phosphate + L-glutamate. It functions in the pathway amino-acid biosynthesis; L-histidine biosynthesis; L-histidine from 5-phospho-alpha-D-ribose 1-diphosphate: step 7/9. The protein is Histidinol-phosphate aminotransferase of Corynebacterium glutamicum (strain ATCC 13032 / DSM 20300 / JCM 1318 / BCRC 11384 / CCUG 27702 / LMG 3730 / NBRC 12168 / NCIMB 10025 / NRRL B-2784 / 534).